Reading from the N-terminus, the 20-residue chain is DELTA-actitoxin-Afr1b (20 aa).

Belongs to the actinoporin family. Sea anemone subfamily. In terms of assembly, octamer or nonamer in membranes. Monomer in the soluble state.

It is found in the secreted. It localises to the nematocyst. The protein localises to the target cell membrane. Pore-forming toxin (PFT) that consists of a crown-shaped octamer or nonamer that forms cation-selective hydrophilic pores of about 1.5 nm (inside) and 13 nm (outside) and causes cytolysis. It causes cardiac stimulation. Also causes hemolysis (HC(50)=0.4 nM). Interestingly, the Phe-16 is crucial for hemolysis. Pore formation is a multi-step process that involves specific recognition of membrane sphingomyelin (but neither cholesterol nor phosphatidylcholine) using aromatic rich region and adjacent phosphocholine (POC) binding site, firm binding to the membrane (mainly driven by hydrophobic interactions) accompanied by the transfer of the N-terminal region to the lipid-water interface and finally pore formation after oligomerization of monomers. It is probable that a dimeric form is an assembly intermediate before the complete oligomerization. The formation of stable pores occurs only in vesicles composed of DOPC/SM (there is no oligomerization when the PFT is treated with vesicles of DOPC or SM alone). The transmembrane pore displays 8 lateral perforations, one at each subunit-subunit interface, partially occupied by the acyl-chain region of a bridging lipid. Each pore contains 24 lipid molecules, firmly bound to each subunit, that is, 3 lipids (L1, L2, L3, L4 and/or L5) are associated to each subunit. Lipid L1 bridges 2 subunits, whereas lipids L2 and L3 bind to sites at single subunit. This is DELTA-actitoxin-Afr1b from Actinia fragacea (Strawberry anemone).